The primary structure comprises 225 residues: Uridine kinase (225 aa).

12–19 (GGTGAGKT) lines the ATP pocket.

It belongs to the uridine kinase family.

The protein resides in the cytoplasm. It carries out the reaction uridine + ATP = UMP + ADP + H(+). It catalyses the reaction cytidine + ATP = CMP + ADP + H(+). The protein operates within pyrimidine metabolism; CTP biosynthesis via salvage pathway; CTP from cytidine: step 1/3. It functions in the pathway pyrimidine metabolism; UMP biosynthesis via salvage pathway; UMP from uridine: step 1/1. The sequence is that of Uridine kinase from Halobacterium salinarum (strain ATCC 700922 / JCM 11081 / NRC-1) (Halobacterium halobium).